The sequence spans 190 residues: DNA-invertase (190 aa).

Residues 2-135 (ATIGYIRVST…AGLAAARAQG (134 aa)) enclose the Resolvase/invertase-type recombinase catalytic domain. S10 functions as the O-(5'-phospho-DNA)-serine intermediate in the catalytic mechanism. A DNA-binding region (H-T-H motif) is located at residues 162-181 (RQQLAIIFGIGVSTLYRYFP).

The protein belongs to the site-specific recombinase resolvase family.

Functionally, a DNA fragment of approximately 900 base pairs, adjacent to the fljB (H2) gene, which specifies the synthesis of phase-2 flagellin, can exist in either orientation with respect to fljB. The orientation of the inversion region controls expression of fljB. The hin gene occupies about two-thirds of the inversion region; it is required for the inversion of the fljB controlling region. This chain is DNA-invertase (hin), found in Salmonella abortus-equi.